Here is a 533-residue protein sequence, read N- to C-terminus: Beta-apo-4'-carotenal oxygenase (533 aa).

Active-site residues include Glu-226 and Cys-260.

The protein belongs to the aldehyde dehydrogenase family.

The enzyme catalyses 4'-apo-beta-carotenal + NAD(+) + H2O = neurosporaxanthin + NADH + 2 H(+). Its function is as follows. Beta-apo-4'-carotenal oxygenase involved in the last step of synthesis of neurosporaxanthin, a carboxylic apocarotenoid acting as an essential protective pigment and leading to orange pigmentation. Converts the aldehyde beta-apo-4'-carotenal into neurosporaxanthin. Neurosporaxanthin is synthesized from geranyl-geranyl pyrophosphate (GGPP) through several enzymatic activities. Phytoene synthase activity performed by the bifunctional enzyme al-2 first produces phytoene from geranyl-geranyl pyrophosphate (GGPP). The phytoene dehydrogenase al-1 then introduces 5 desaturations to lead to 3,4-didehydrolycopene via the intermediates phytofluene, zeta-carotene, neurosporene and lycopene. Al-2 cyclase activity then converts 3,4-didehydrolycopene into torulene. Al-2 can also convet lycopene into gamma-carotene which in turn is converted to beta-carotene by an additional al-2 cyclization reaction. Torulene is the substrate of the dioxidase cao-2 that breaks the molecule, removing five carbon atoms to yield beta-apo-4'-carotenal, whereas the aldehyde dehydrogenase ylo-1 mediates the last step by converting beta-apo-4'-carotenal into neurosporaxanthin. The sequence is that of Beta-apo-4'-carotenal oxygenase from Neurospora crassa (strain ATCC 24698 / 74-OR23-1A / CBS 708.71 / DSM 1257 / FGSC 987).